The primary structure comprises 652 residues: MTEHVEQLEFQAETHQLLELMIHSVYSNKDTFLRELISNASDALDKLRLESFKDKDLHVDTADLHIELEVDKDNRILTVRDNGIGMSRAEVVDLIGTLAKSGTAELRRKLSEAKSEAAAEELIGQFGIGFYSTFMVADKVTLTTRKAGETGGTRWESSAGSSTYTIEDLAEAPQGTAVSLHLKPADEEDHLYDYTQEWKLREIVKKYSDFIAWPIRMQVERTVTEGEGEDKQEKTIVEEQTLNSRKALWTRPRGEVSDEEYKEFYKHVSHAWDEPLEIIPLKAEGTFEYQALLFLPSQAPFDLFTREHKRGVQLYVKRVFIMDNCEELMPEYLRFVKGVVDAQDLSLNVSREILQQDRQIQMIRKRLVKKVLATVKDLQQAEDQSKYQTFWREFGRVLKEGLLSDFDNRETILQVSSFASTHSDSELTTLAQYVERMPEGQDAIYYMTGESRQQVESSPHMEAFKAKGREVLILTDPVDEMWVGSVPEFDGKRFQSIAKGEVDLESEEEKKASEALREQQDKEFADLLSWLGKTLEENIKEVRLTNRLTTSPACLVGDVFDFTPMLERMYRASGQPVPVSKRILELNPTHPLVTGLRDAYDQRKQDADEGKVPELTETAELLYGTAVLAEGGELKDPARFAHILTDRLTRTL.

Positions 1-351 (MTEHVEQLEF…AQDLSLNVSR (351 aa)) are a; substrate-binding. The b stretch occupies residues 352 to 568 (EILQQDRQIQ…VFDFTPMLER (217 aa)). The tract at residues 569–652 (MYRASGQPVP…ILTDRLTRTL (84 aa)) is c.

It belongs to the heat shock protein 90 family. In terms of assembly, homodimer.

The protein localises to the cytoplasm. Its function is as follows. Molecular chaperone. Has ATPase activity. This chain is Chaperone protein HtpG, found in Nocardia farcinica (strain IFM 10152).